Reading from the N-terminus, the 92-residue chain is Integration host factor subunit beta (92 aa).

Belongs to the bacterial histone-like protein family. In terms of assembly, heterodimer of an alpha and a beta chain.

This protein is one of the two subunits of integration host factor, a specific DNA-binding protein that functions in genetic recombination as well as in transcriptional and translational control. This is Integration host factor subunit beta from Vibrio cholerae serotype O1 (strain ATCC 39541 / Classical Ogawa 395 / O395).